The primary structure comprises 914 residues: Isoleucine--tRNA ligase (914 aa).

Positions 64 to 74 (PYANGNFHLGH) match the 'HIGH' region motif. Glutamate 557 contributes to the L-isoleucyl-5'-AMP binding site. The 'KMSKS' region motif lies at 598 to 602 (AMSKS). ATP is bound at residue lysine 601. Zn(2+) is bound by residues cysteine 889, cysteine 892, cysteine 906, and cysteine 909.

The protein belongs to the class-I aminoacyl-tRNA synthetase family. IleS type 1 subfamily. As to quaternary structure, monomer. Requires Zn(2+) as cofactor.

The protein localises to the cytoplasm. The catalysed reaction is tRNA(Ile) + L-isoleucine + ATP = L-isoleucyl-tRNA(Ile) + AMP + diphosphate. Catalyzes the attachment of isoleucine to tRNA(Ile). As IleRS can inadvertently accommodate and process structurally similar amino acids such as valine, to avoid such errors it has two additional distinct tRNA(Ile)-dependent editing activities. One activity is designated as 'pretransfer' editing and involves the hydrolysis of activated Val-AMP. The other activity is designated 'posttransfer' editing and involves deacylation of mischarged Val-tRNA(Ile). The sequence is that of Isoleucine--tRNA ligase from Leptospira borgpetersenii serovar Hardjo-bovis (strain JB197).